A 119-amino-acid polypeptide reads, in one-letter code: Immunoglobulin heavy variable 2-70D (119 aa).

The N-terminal stretch at 1-19 is a signal peptide; sequence MDILCSTLLLLTVPSWVLS. Gln-20 carries the pyrrolidone carboxylic acid modification. The tract at residues 20–44 is framework-1; that stretch reads QVTLKESGPALVKPTQTLTLTCTFS. The Ig-like domain maps to 20–119; it reads QVTLKESGPA…DTATYYCARI (100 aa). Cys-41 and Cys-116 are disulfide-bonded. The interval 45–54 is complementarity-determining-1; that stretch reads GFSLSTSGMR. A framework-2 region spans residues 55-71; it reads VSWIRQPPGKALEWLAR. The segment at 72-78 is complementarity-determining-2; sequence IDWDDDK. Residues 79-116 are framework-3; that stretch reads FYSTSLKTRLTISKDTSKNQVVLTMTNMDPVDTATYYC. The complementarity-determining-3 stretch occupies residues 117–119; that stretch reads ARI.

As to quaternary structure, immunoglobulins are composed of two identical heavy chains and two identical light chains; disulfide-linked.

Its subcellular location is the secreted. It localises to the cell membrane. In terms of biological role, v region of the variable domain of immunoglobulin heavy chains that participates in the antigen recognition. Immunoglobulins, also known as antibodies, are membrane-bound or secreted glycoproteins produced by B lymphocytes. In the recognition phase of humoral immunity, the membrane-bound immunoglobulins serve as receptors which, upon binding of a specific antigen, trigger the clonal expansion and differentiation of B lymphocytes into immunoglobulins-secreting plasma cells. Secreted immunoglobulins mediate the effector phase of humoral immunity, which results in the elimination of bound antigens. The antigen binding site is formed by the variable domain of one heavy chain, together with that of its associated light chain. Thus, each immunoglobulin has two antigen binding sites with remarkable affinity for a particular antigen. The variable domains are assembled by a process called V-(D)-J rearrangement and can then be subjected to somatic hypermutations which, after exposure to antigen and selection, allow affinity maturation for a particular antigen. The sequence is that of Immunoglobulin heavy variable 2-70D from Homo sapiens (Human).